The sequence spans 412 residues: Phosphoglycerate kinase (412 aa).

(2R)-3-phosphoglycerate contacts are provided by valine 20, aspartate 21, phenylalanine 22, asparagine 23, glutamine 35, arginine 36, serine 59, histidine 60, glycine 62, arginine 63, leucine 118, arginine 119, histidine 166, and arginine 167. Glycine 210 lines the ADP pocket. CDP is bound at residue glycine 210. AMP contacts are provided by alanine 211 and lysine 212. ATP is bound at residue alanine 211. A Mg(2+)-binding site is contributed by alanine 211. Mg(2+)-binding residues include alanine 214 and aspartate 215. Position 215 (aspartate 215) interacts with CDP. Residue lysine 216 participates in AMP binding. Residue lysine 216 coordinates ATP. Glycine 234 lines the ADP pocket. CDP is bound at residue glycine 234. Glycine 235 and glycine 308 together coordinate AMP. ATP-binding residues include glycine 235 and glycine 308. Glycine 333 and phenylalanine 338 together coordinate CDP. Phenylalanine 338 is a binding site for ADP. Glutamate 339 contributes to the AMP binding site. Glutamate 339, aspartate 370, and threonine 371 together coordinate ATP. Residue aspartate 370 coordinates Mg(2+).

This sequence belongs to the phosphoglycerate kinase family. Monomer. It depends on Mg(2+) as a cofactor.

It is found in the cytoplasm. The catalysed reaction is (2R)-3-phosphoglycerate + ATP = (2R)-3-phospho-glyceroyl phosphate + ADP. It functions in the pathway carbohydrate degradation; glycolysis; pyruvate from D-glyceraldehyde 3-phosphate: step 2/5. In terms of biological role, catalyzes one of the two ATP producing reactions in the glycolytic pathway via the reversible conversion of 1,3-diphosphoglycerate to 3-phosphoglycerate. In addition to its role as a glycolytic enzyme, it seems that PGK-1 acts as a polymerase alpha cofactor protein (primer recognition protein). May play a role in sperm motility. The polypeptide is Phosphoglycerate kinase (PGK) (Aplysia californica (California sea hare)).